Here is a 125-residue protein sequence, read N- to C-terminus: Large ribosomal subunit protein bL12 (125 aa).

Belongs to the bacterial ribosomal protein bL12 family. In terms of assembly, homodimer. Part of the ribosomal stalk of the 50S ribosomal subunit. Forms a multimeric L10(L12)X complex, where L10 forms an elongated spine to which 2 to 4 L12 dimers bind in a sequential fashion. Binds GTP-bound translation factors.

In terms of biological role, forms part of the ribosomal stalk which helps the ribosome interact with GTP-bound translation factors. Is thus essential for accurate translation. The polypeptide is Large ribosomal subunit protein bL12 (Francisella tularensis subsp. tularensis (strain SCHU S4 / Schu 4)).